The following is a 258-amino-acid chain: Malonyl-[acyl-carrier protein] O-methyltransferase (258 aa).

The protein belongs to the methyltransferase superfamily.

It carries out the reaction malonyl-[ACP] + S-adenosyl-L-methionine = malonyl-[ACP] methyl ester + S-adenosyl-L-homocysteine. Its pathway is cofactor biosynthesis; biotin biosynthesis. In terms of biological role, converts the free carboxyl group of a malonyl-thioester to its methyl ester by transfer of a methyl group from S-adenosyl-L-methionine (SAM). It allows to synthesize pimeloyl-ACP via the fatty acid synthetic pathway. This Haemophilus ducreyi (strain 35000HP / ATCC 700724) protein is Malonyl-[acyl-carrier protein] O-methyltransferase.